The sequence spans 147 residues: Myoglobin (147 aa).

In terms of domain architecture, Globin spans 2 to 141; it reads ADFDMVLKCW…IIADMEADYK (140 aa). His-60 serves as a coordination point for nitrite. Residue His-60 participates in O2 binding. His-89 contributes to the heme b binding site.

Belongs to the globin family. Monomeric.

It is found in the cytoplasm. It localises to the sarcoplasm. The enzyme catalyses Fe(III)-heme b-[protein] + nitric oxide + H2O = Fe(II)-heme b-[protein] + nitrite + 2 H(+). It carries out the reaction H2O2 + AH2 = A + 2 H2O. Functionally, monomeric heme protein which primary function is to store oxygen and facilitate its diffusion within muscle tissues. Reversibly binds oxygen through a pentacoordinated heme iron and enables its timely and efficient release as needed during periods of heightened demand. Depending on the oxidative conditions of tissues and cells, and in addition to its ability to bind oxygen, it also has a nitrite reductase activity whereby it regulates the production of bioactive nitric oxide. Under stress conditions, like hypoxia and anoxia, it also protects cells against reactive oxygen species thanks to its pseudoperoxidase activity. This Pseudochaenichthys georgianus (South Georgia icefish) protein is Myoglobin (mb).